We begin with the raw amino-acid sequence, 446 residues long: Rhamnogalacturonase A (446 aa).

The signal sequence occupies residues 1–18 (MPALPILALALAPLLVNG). A disulfide bridge connects residues C39 and C65. N-linked (GlcNAc...) asparagine glycosylation is found at N50, N115, and N124. D216 functions as the Proton donor in the catalytic mechanism. An intrachain disulfide couples C218 to C235. N-linked (GlcNAc...) asparagine glycans are attached at residues N236, N281, and N318. 2 disulfide bridges follow: C341–C347 and C369–C378.

It belongs to the glycosyl hydrolase 28 family.

It is found in the secreted. The enzyme catalyses Endohydrolysis of alpha-D-GalA-(1-&gt;2)-alpha-L-Rha glycosidic bond in the rhamnogalacturonan I backbone with initial inversion of anomeric configuration releasing oligosaccharides with beta-D-GalA at the reducing end.. Functionally, pectinolytic enzymes consist of four classes of enzymes: pectine lyase, polygalacturonase, pectin methylesterase and rhamnogalacturonase. Hydrolyzes alpha-D-galacturonopyranosyl-(1,2)-alpha-L-rhamnopyranosyl linkages in the backbone of the hairy regions of pectins. The polypeptide is Rhamnogalacturonase A (rhgA) (Aspergillus niger).